The following is a 448-amino-acid chain: Maltoporin (448 aa).

The N-terminal stretch at methionine 1 to alanine 25 is a signal peptide.

It belongs to the porin LamB (TC 1.B.3) family. In terms of assembly, homotrimer formed of three 18-stranded antiparallel beta-barrels, containing three independent channels.

Its subcellular location is the cell outer membrane. It carries out the reaction beta-maltose(in) = beta-maltose(out). Functionally, involved in the transport of maltose and maltodextrins. The chain is Maltoporin from Cronobacter sakazakii (strain ATCC BAA-894) (Enterobacter sakazakii).